Consider the following 197-residue polypeptide: Translation machinery-associated protein 22 (197 aa).

An SUI1 domain is found at 102–173; that stretch reads VQIKRVERNK…DVKEWLLEVY (72 aa).

Belongs to the DENR family. In terms of assembly, interacts with the 40S ribosomal subunit.

The protein localises to the cytoplasm. This Aspergillus niger (strain ATCC MYA-4892 / CBS 513.88 / FGSC A1513) protein is Translation machinery-associated protein 22 (tma22).